Consider the following 2567-residue polypeptide: Unconventional myosin-XVIIIb (2567 aa).

The interval 41-508 is disordered; it reads LVRGTEKEAK…SRDSDQAPED (468 aa). Residues 44–54 show a composition bias toward basic and acidic residues; that stretch reads GTEKEAKEARQ. Residues 71–104 are compositionally biased toward low complexity; it reads SISQPNSKSSSGTRSGSQQISQDDQSSSPGSSDI. 2 stretches are compositionally biased toward basic and acidic residues: residues 105–116 and 160–176; these read LGKESEGSRSPD and LDPDSAKPEKTHPHDAP. The segment covering 196–206 has biased composition (polar residues); the sequence is SRTPCGSQAST. 3 stretches are compositionally biased toward basic and acidic residues: residues 251–265, 278–287, and 326–349; these read TELKEAEPQGKDRQG, RPGKAEKEGA, and SKWDGPQNKKDKEGVLLSKAEKTG. Residues 350 to 362 are compositionally biased toward polar residues; sequence EPQTQMEKTSQVQ. 4 stretches are compositionally biased toward basic and acidic residues: residues 367–377, 410–420, 471–485, and 492–508; these read DDLRMGEKAGE, SQTEKGCEAPK, LEKDAERPRIRKENQ, and EEGKGGQSRDSDQAPED. One can recognise a Myosin motor domain in the interval 571-1333; the sequence is DQVEDLASLI…VISRLEKQRE (763 aa). 660–667 serves as a coordination point for ATP; sequence GWSGAGKT. The disordered stretch occupies residues 1208 to 1232; that stretch reads VESRSGQESPPPPQPGRDKPGAGGP. Residues 1213–1240 form a GPA region; sequence GQESPPPPQPGRDKPGAGGPLALDIPAL. Ser-1216 carries the post-translational modification Phosphoserine. The IQ domain maps to 1336 to 1365; sequence VSQSIVLFQAACKGFLSRQEFKKLKIRRLA. Coiled coils occupy residues 1396 to 1783, 1825 to 1961, and 2014 to 2090; these read SATI…GLIG, KTSV…STVD, and ESQQ…VASS. Residues 1426 to 2083 are tail; that stretch reads NELRQNTDLL…IRRIADLQAA (658 aa). Ser-1829 is subject to Phosphoserine. The segment covering 2139 to 2153 has biased composition (polar residues); sequence TMRTPSRQSATSSRI. Disordered stretches follow at residues 2139–2194 and 2217–2249; these read TMRT…PVSP and STERLEPASSPLASRSTNTSPLSREKLPSPSAA. The segment covering 2158–2167 has biased composition (basic and acidic residues); that stretch reads INEEAGDTER. A compositionally biased stretch (polar residues) spans 2168–2185; it reads TQSALALSRARSTNVHSK. Ser-2193 bears the Phosphoserine mark. Positions 2227–2238 are enriched in polar residues; the sequence is PLASRSTNTSPL. Ser-2296 and Ser-2309 each carry phosphoserine. Residues 2357 to 2376 form a disordered region; sequence SRPSMGRKLSSPTTPRDMLL. Ser-2377 is modified (phosphoserine). 2 disordered regions span residues 2444 to 2471 and 2494 to 2567; these read FLPAIRKPQTPTSLAGSAKGGQDGSQRS and KSPE…YLQK. Over residues 2494–2504 the composition is skewed to basic and acidic residues; the sequence is KSPEPKEDPAH. Residues 2506–2520 are compositionally biased toward low complexity; the sequence is SDSSSSSGSIVSFKS. Residues 2537-2556 are compositionally biased toward basic and acidic residues; that stretch reads GGERTSPERREPGTGRKDDD.

The protein belongs to the TRAFAC class myosin-kinesin ATPase superfamily. Myosin family. As to quaternary structure, homodimer. May interact with F actin through the GPA motif (Gly/Pro/Ala-rich). In terms of tissue distribution, selectively expressed in cardiac and skeletal muscles. Weakly expressed in testis, pancreas, placenta, prostate, lung and thymus.

The protein localises to the cytoplasm. It localises to the nucleus. The protein resides in the myofibril. Its subcellular location is the sarcomere. May be involved in intracellular trafficking of the muscle cell when in the cytoplasm, whereas entering the nucleus, may be involved in the regulation of muscle specific genes. May play a role in the control of tumor development and progression; restored MYO18B expression in lung cancer cells suppresses anchorage-independent growth. The protein is Unconventional myosin-XVIIIb (MYO18B) of Homo sapiens (Human).